The primary structure comprises 305 residues: Coiled-coil domain-containing protein 69-A (305 aa).

Glycine 2 carries N-myristoyl glycine lipidation. Residues 13–38 form a disordered region; that stretch reads LRKKKRQKAHQGGLTSQELNDLNAKT. Polar residues predominate over residues 25–38; the sequence is GLTSQELNDLNAKT. A coiled-coil region spans residues 42–281; sequence NEVLQKIKEY…QREKEQNLYR (240 aa).

Belongs to the CCDC69 family.

It is found in the cytoplasm. The protein localises to the cytoskeleton. It localises to the spindle. Its subcellular location is the midbody. Functionally, may act as a scaffold to regulate the recruitment and assembly of spindle midzone components. This is Coiled-coil domain-containing protein 69-A (ccdc69-a) from Xenopus laevis (African clawed frog).